Reading from the N-terminus, the 90-residue chain is Small ribosomal subunit protein bS16 (90 aa).

The protein belongs to the bacterial ribosomal protein bS16 family.

The sequence is that of Small ribosomal subunit protein bS16 from Bacillus licheniformis (strain ATCC 14580 / DSM 13 / JCM 2505 / CCUG 7422 / NBRC 12200 / NCIMB 9375 / NCTC 10341 / NRRL NRS-1264 / Gibson 46).